A 97-amino-acid polypeptide reads, in one-letter code: Large ribosomal subunit protein eL21 (97 aa).

The protein belongs to the eukaryotic ribosomal protein eL21 family.

This Methanosarcina mazei (strain ATCC BAA-159 / DSM 3647 / Goe1 / Go1 / JCM 11833 / OCM 88) (Methanosarcina frisia) protein is Large ribosomal subunit protein eL21.